The primary structure comprises 689 residues: Transcription termination factor Rho (689 aa).

Over residues 1–20 (MPRTPKNQNLEQNTQTQSLT) the composition is skewed to polar residues. Disordered stretches follow at residues 1–90 (MPRT…KQPV) and 151–213 (AQAQ…NRNN). The segment covering 52–65 (PKRRGRKPNPKTKA) has biased composition (basic residues). Composition is skewed to low complexity over residues 170-183 (NAQQ…QNGE) and 191-213 (NNQN…NRNN). The Rho RNA-BD domain maps to 287 to 362 (IIYTEGVLEV…RRIDRVNFEE (76 aa)). ATP contacts are provided by residues 405 to 410 (GKGQRS), 417 to 422 (RTGKTV), and Arg-448.

Belongs to the Rho family. Homohexamer. The homohexamer assembles into an open ring structure.

In terms of biological role, facilitates transcription termination by a mechanism that involves Rho binding to the nascent RNA, activation of Rho's RNA-dependent ATPase activity, and release of the mRNA from the DNA template. The protein is Transcription termination factor Rho of Fibrobacter succinogenes (strain ATCC 19169 / S85).